We begin with the raw amino-acid sequence, 222 residues long: Physcion biosynthesis cluster O-methyltransferase (222 aa).

This sequence belongs to the methyltransferase superfamily.

It catalyses the reaction emodin + S-adenosyl-L-methionine = physcion + S-adenosyl-L-homocysteine. Its pathway is secondary metabolite biosynthesis. Its function is as follows. O-methyltransferase; part of the gene cluster that mediates the biosynthesis of physcion, a natural anthraquinone fungicide that can prevent plant fungal infections. Within the pathway, the O-methyltransferase AcOMT catalyzes the last step by transferring a methyl group to C-6 hydroxyl of emodin to form physcion. AcOMT may also methylate the C-6 hydroxyl group of emodin anthrone to produce physcion-anthrone B. The pathway begins with the polyketide synthase AcPKS that condenses 8 malonyl-CoA units to synthesize atrochrysone thioester which is released from the synthase by the atrochrysone carboxyl ACP thioesterase AcTE that breaks the thioester bond and leads to free atrochrysone carboxylic acid. Spontaneous decarboxylation of atrochrysone carboxylic acid leads to the formation of atrochrysone. Then, atrochrysone undergoes spontaneous dehydration and oxidation, giving the products emodin anthrone and emodin. The O-methyltransferase AcOMT then methylates the C-6 hydroxyl of emodin to form physcion. In Aspergillus chevalieri (Eurotium chevalieri), this protein is Physcion biosynthesis cluster O-methyltransferase.